The primary structure comprises 647 residues: Putative pre-mRNA-splicing factor ATP-dependent RNA helicase C20H4.09 (647 aa).

Residues 35-199 (LYAVEQNQIT…FGQDKVCTMS (165 aa)) enclose the Helicase ATP-binding domain. 48–55 (GHTGCGKT) is a binding site for ATP. The DEAH box motif lies at 146–149 (DEVH). The 180-residue stretch at 219–398 (YVDSAIETVI…PLVLFLKGLG (180 aa)) folds into the Helicase C-terminal domain.

This sequence belongs to the DEAD box helicase family. DEAH subfamily.

The protein resides in the nucleus. The catalysed reaction is ATP + H2O = ADP + phosphate + H(+). In terms of biological role, pre-mRNA processing factor involved in disassembly of spliceosomes after the release of mature mRNA. The chain is Putative pre-mRNA-splicing factor ATP-dependent RNA helicase C20H4.09 from Schizosaccharomyces pombe (strain 972 / ATCC 24843) (Fission yeast).